Reading from the N-terminus, the 836-residue chain is Protein translocase subunit SecA (836 aa).

ATP contacts are provided by residues Gln85, 103-107, and Asp492; that span reads GEGKT. 4 residues coordinate Zn(2+): Cys820, Cys822, Cys831, and Cys832.

This sequence belongs to the SecA family. Monomer and homodimer. Part of the essential Sec protein translocation apparatus which comprises SecA, SecYEG and auxiliary proteins SecDF. Other proteins may also be involved. The cofactor is Zn(2+).

It localises to the cell membrane. It is found in the cytoplasm. The catalysed reaction is ATP + H2O + cellular proteinSide 1 = ADP + phosphate + cellular proteinSide 2.. In terms of biological role, part of the Sec protein translocase complex. Interacts with the SecYEG preprotein conducting channel. Has a central role in coupling the hydrolysis of ATP to the transfer of proteins into and across the cell membrane, serving as an ATP-driven molecular motor driving the stepwise translocation of polypeptide chains across the membrane. This is Protein translocase subunit SecA from Clostridium botulinum (strain Eklund 17B / Type B).